The primary structure comprises 548 residues: ATP synthase subunit alpha, mitochondrial (548 aa).

209 to 216 (GDRQTGKT) contacts ATP.

This sequence belongs to the ATPase alpha/beta chains family. In terms of assembly, F-type ATPases have 2 components, CF(1) - the catalytic core - and CF(0) - the membrane proton channel. CF(1) has five subunits: alpha(3), beta(3), gamma(1), delta(1), epsilon(1). CF(0) has three main subunits: a, b and c.

Its subcellular location is the mitochondrion. It localises to the mitochondrion inner membrane. Functionally, mitochondrial membrane ATP synthase (F(1)F(0) ATP synthase or Complex V) produces ATP from ADP in the presence of a proton gradient across the membrane which is generated by electron transport complexes of the respiratory chain. F-type ATPases consist of two structural domains, F(1) - containing the extramembraneous catalytic core, and F(0) - containing the membrane proton channel, linked together by a central stalk and a peripheral stalk. During catalysis, ATP synthesis in the catalytic domain of F(1) is coupled via a rotary mechanism of the central stalk subunits to proton translocation. Subunits alpha and beta form the catalytic core in F(1). Rotation of the central stalk against the surrounding alpha(3)beta(3) subunits leads to hydrolysis of ATP in three separate catalytic sites on the beta subunits. Subunit alpha does not bear the catalytic high-affinity ATP-binding sites. The polypeptide is ATP synthase subunit alpha, mitochondrial (ATP1) (Kluyveromyces lactis (strain ATCC 8585 / CBS 2359 / DSM 70799 / NBRC 1267 / NRRL Y-1140 / WM37) (Yeast)).